A 79-amino-acid polypeptide reads, in one-letter code: uncharacterized protein (79 aa).

A disordered region spans residues 20-52; the sequence is TERGAGLSPAAPPDPSPAIAPTMAEGGVPSPGP.

This is an uncharacterized protein from Homo sapiens (Human).